Here is a 490-residue protein sequence, read N- to C-terminus: Aspartyl/glutamyl-tRNA(Asn/Gln) amidotransferase subunit B (490 aa).

The protein belongs to the GatB/GatE family. GatB subfamily. As to quaternary structure, heterotrimer of A, B and C subunits.

The enzyme catalyses L-glutamyl-tRNA(Gln) + L-glutamine + ATP + H2O = L-glutaminyl-tRNA(Gln) + L-glutamate + ADP + phosphate + H(+). It catalyses the reaction L-aspartyl-tRNA(Asn) + L-glutamine + ATP + H2O = L-asparaginyl-tRNA(Asn) + L-glutamate + ADP + phosphate + 2 H(+). In terms of biological role, allows the formation of correctly charged Asn-tRNA(Asn) or Gln-tRNA(Gln) through the transamidation of misacylated Asp-tRNA(Asn) or Glu-tRNA(Gln) in organisms which lack either or both of asparaginyl-tRNA or glutaminyl-tRNA synthetases. The reaction takes place in the presence of glutamine and ATP through an activated phospho-Asp-tRNA(Asn) or phospho-Glu-tRNA(Gln). This chain is Aspartyl/glutamyl-tRNA(Asn/Gln) amidotransferase subunit B, found in Burkholderia thailandensis (strain ATCC 700388 / DSM 13276 / CCUG 48851 / CIP 106301 / E264).